Reading from the N-terminus, the 38-residue chain is Esterase-5 (38 aa).

Residues 1-38 (SAAADPLIVELPNGKVRGRDNEGYYEAEGIPRAEPPVG) are disordered.

This sequence belongs to the type-B carboxylesterase/lipase family.

It carries out the reaction a carboxylic ester + H2O = an alcohol + a carboxylate + H(+). The sequence is that of Esterase-5 (Est-5) from Drosophila mojavensis (Fruit fly).